Reading from the N-terminus, the 534-residue chain is Origin of replication complex subunit 5 (534 aa).

Residues Met1–Ile36 are disordered. Gly83–Thr90 lines the ATP pocket. Positions His129–Gly136 match the Nuclear localization signal motif. The interval Met397 to Ala428 is disordered. The segment covering Ser414 to Ala424 has biased composition (basic and acidic residues).

The protein belongs to the ORC5 family. In terms of assembly, component of the origin recognition complex (ORC) composed of at least ORC1 (ORC1A or ORC1B), ORC2, ORC3, ORC4, ORC5 and ORC6. ORC is regulated in a cell-cycle and development dependent manner. It is sequentially assembled at the exit from anaphase of mitosis and disassembled as cells enter S phase. Interacts directly with ORC1A, ORC1B, ORC2, ORC3, ORC4 and ORC6. In terms of tissue distribution, follow a cell-cycle regulation with a peak at the G1/S-phase. Mostly expressed in flower buds and cauline leaves, and, to a lower exent, in roots, leaves and stems. Expressed at low levels ubiquitously.

The protein resides in the nucleus. Component of the origin recognition complex (ORC) that binds origins of replication. DNA-binding is ATP-dependent. The specific DNA sequences that define origins of replication have not been identified yet. ORC is required to assemble the pre-replication complex necessary to initiate DNA replication. This chain is Origin of replication complex subunit 5, found in Arabidopsis thaliana (Mouse-ear cress).